Reading from the N-terminus, the 469-residue chain is uncharacterized protein (469 aa).

An HTH gntR-type domain is found at 13 to 81 (TPLYEQLYTF…PKIGWFAAEV (69 aa)). Residues 41 to 60 (KRRLSSLLDVSTATIERAYE) constitute a DNA-binding region (H-T-H motif). Lys309 is subject to N6-(pyridoxal phosphate)lysine.

In the C-terminal section; belongs to the class-I pyridoxal-phosphate-dependent aminotransferase family. Pyridoxal 5'-phosphate is required as a cofactor.

This is an uncharacterized protein from Bacillus subtilis (strain 168).